A 417-amino-acid chain; its full sequence is Tryptophan synthase beta chain (417 aa).

Lys99 bears the N6-(pyridoxal phosphate)lysine mark.

Belongs to the TrpB family. Tetramer of two alpha and two beta chains. It depends on pyridoxal 5'-phosphate as a cofactor.

It catalyses the reaction (1S,2R)-1-C-(indol-3-yl)glycerol 3-phosphate + L-serine = D-glyceraldehyde 3-phosphate + L-tryptophan + H2O. The protein operates within amino-acid biosynthesis; L-tryptophan biosynthesis; L-tryptophan from chorismate: step 5/5. The beta subunit is responsible for the synthesis of L-tryptophan from indole and L-serine. The polypeptide is Tryptophan synthase beta chain (Corynebacterium glutamicum (strain R)).